Reading from the N-terminus, the 263-residue chain is 4-hydroxy-tetrahydrodipicolinate reductase (263 aa).

Residues 7–12, 96–98, and 122–125 each bind NAD(+); these read GFKGRM, GTT, and APNF. H152 functions as the Proton donor/acceptor in the catalytic mechanism. H153 contributes to the (S)-2,3,4,5-tetrahydrodipicolinate binding site. K156 functions as the Proton donor in the catalytic mechanism. Residue 162 to 163 coordinates (S)-2,3,4,5-tetrahydrodipicolinate; it reads GT.

Belongs to the DapB family.

Its subcellular location is the cytoplasm. The catalysed reaction is (S)-2,3,4,5-tetrahydrodipicolinate + NAD(+) + H2O = (2S,4S)-4-hydroxy-2,3,4,5-tetrahydrodipicolinate + NADH + H(+). It catalyses the reaction (S)-2,3,4,5-tetrahydrodipicolinate + NADP(+) + H2O = (2S,4S)-4-hydroxy-2,3,4,5-tetrahydrodipicolinate + NADPH + H(+). It functions in the pathway amino-acid biosynthesis; L-lysine biosynthesis via DAP pathway; (S)-tetrahydrodipicolinate from L-aspartate: step 4/4. Its function is as follows. Catalyzes the conversion of 4-hydroxy-tetrahydrodipicolinate (HTPA) to tetrahydrodipicolinate. In Listeria monocytogenes serotype 4b (strain CLIP80459), this protein is 4-hydroxy-tetrahydrodipicolinate reductase.